The following is a 210-amino-acid chain: T-cell antigen CD7 (210 aa).

Positions 1-23 (MTQQAVLALLLTLAGILPGPLDA) are cleaved as a signal peptide. The Ig-like domain occupies 24 to 129 (QDVHQSPRLT…RGLFTTVVVK (106 aa)). The Extracellular segment spans residues 24–150 (QDVHQSPRLT…EPLQTSFSFP (127 aa)). N-linked (GlcNAc...) asparagine glycans are attached at residues Asn42, Asn86, and Asn93. Cys45 and Cys111 are disulfide-bonded. The chain crosses the membrane as a helical span at residues 151-171 (AAIAVGFFFTGLLLGVVCSML). Cys168 is lipidated: S-palmitoyl cysteine. At 172 to 210 (RKIQIKKLCASGIKESPCVVYEDMSYSNRKTPCIPNQYQ) the chain is on the cytoplasmic side.

As to quaternary structure, interacts with SECTM1.

It is found in the membrane. Its function is as follows. Transmembrane glycoprotein expressed by T-cells and natural killer (NK) cells and their precursors. Plays a costimulatory role in T-cell activation upon binding to its ligand K12/SECTM1. In turn, mediates the production of cytokines such as IL-2. On resting NK-cells, CD7 activation results in a significant induction of gamma-interferon levels. This Mus musculus (Mouse) protein is T-cell antigen CD7 (Cd7).